A 32-amino-acid polypeptide reads, in one-letter code: MSDIN-like toxin proprotein 2 (32 aa).

The propeptide occupies 1 to 10 (MSDINATRLP). A cross-link (cyclopeptide (His-Pro)) is located at residues 11–17 (HLVRYPP). A propeptide spanning residues 18–32 (YVGDGTDLTLNRGEK) is cleaved from the precursor.

It belongs to the MSDIN fungal toxin family. Processed by the macrocyclase-peptidase enzyme POPB to yield a toxic cyclic heptapeptide. POPB first removes 10 residues from the N-terminus. Conformational trapping of the remaining peptide forces the enzyme to release this intermediate rather than proceed to macrocyclization. The enzyme rebinds the remaining peptide in a different conformation and catalyzes macrocyclization of the N-terminal 7 residues.

Functionally, probable toxin that belongs to the MSDIN-like toxin family responsible for a large number of food poisoning cases and deaths. The chain is MSDIN-like toxin proprotein 2 from Amanita fuligineoides.